Here is a 103-residue protein sequence, read N- to C-terminus: MAALSLSVSTVKPLSDRVFVKVNASEEKTAGGLYLPDTAKEKPQVGEVVALGPGKRNEDGSRQELEIKVGDKVLYSKYAGTDIKLGTEEYVLLSEKDILAVVI.

Belongs to the GroES chaperonin family. Heptamer of 7 subunits arranged in a ring. Interacts with the chaperonin GroEL.

The protein localises to the cytoplasm. Together with the chaperonin GroEL, plays an essential role in assisting protein folding. The GroEL-GroES system forms a nano-cage that allows encapsulation of the non-native substrate proteins and provides a physical environment optimized to promote and accelerate protein folding. GroES binds to the apical surface of the GroEL ring, thereby capping the opening of the GroEL channel. The chain is Co-chaperonin GroES from Nostoc punctiforme (strain ATCC 29133 / PCC 73102).